The sequence spans 234 residues: Glucosamine-6-phosphate deaminase (234 aa).

The Proton acceptor; for enolization step role is filled by D63. The active-site For ring-opening step is N129. H131 serves as the catalytic Proton acceptor; for ring-opening step. The active-site For ring-opening step is E136.

It belongs to the glucosamine/galactosamine-6-phosphate isomerase family. NagB subfamily.

The enzyme catalyses alpha-D-glucosamine 6-phosphate + H2O = beta-D-fructose 6-phosphate + NH4(+). It participates in amino-sugar metabolism; N-acetylneuraminate degradation; D-fructose 6-phosphate from N-acetylneuraminate: step 5/5. Its function is as follows. Catalyzes the reversible isomerization-deamination of glucosamine 6-phosphate (GlcN6P) to form fructose 6-phosphate (Fru6P) and ammonium ion. This Listeria monocytogenes serotype 4b (strain CLIP80459) protein is Glucosamine-6-phosphate deaminase.